The following is a 446-amino-acid chain: Histidine--tRNA ligase (446 aa).

This sequence belongs to the class-II aminoacyl-tRNA synthetase family. As to quaternary structure, homodimer.

The protein localises to the cytoplasm. The catalysed reaction is tRNA(His) + L-histidine + ATP = L-histidyl-tRNA(His) + AMP + diphosphate + H(+). In Burkholderia pseudomallei (strain 1710b), this protein is Histidine--tRNA ligase.